We begin with the raw amino-acid sequence, 365 residues long: Zinc finger MYND domain-containing protein 12 (365 aa).

Positions 17, 20, 28, 31, 37, 41, 50, and 54 each coordinate Zn(2+). The MYND-type; atypical zinc finger occupies 17–54 (CEVCEAPAERVCAACTVTYYCGVVHQKADWDSIHEKIC). TPR repeat units follow at residues 172–205 (SLLH…ASCA) and 214–247 (SGGY…WHAY).

In terms of tissue distribution, expressed predominantly in the testis.

The protein resides in the cell projection. Its subcellular location is the cilium. The protein localises to the flagellum. Functionally, required for sperm flagellum function and male fertility. The polypeptide is Zinc finger MYND domain-containing protein 12 (ZMYND12) (Homo sapiens (Human)).